The chain runs to 433 residues: SITKVFARTIFDSRGNPTVEVDLYTSKGLFRAAVPSGASTGVHEALEMRDGDKSKYHGKSVFNAVKNVNDVIVPEIIKSGLKVTQQKECDEFMCKLDGTENKSSLGANAILGVSLAICKAGAAELGIPLYRHIANLANYDEVILPVPAFNVINGGSHAGNKLAMQEFMILPTGATSFTEAMRMGTEVYHHLKAVIKARFGLDATAVGDEGGFAPNILNNKDALDLIQEAIKKAGYTGKIEIGMDVAASEFYKQNNIYDLDFKTANNDGSQKISGDQLRDMYMEFCKDFPIVSIEDPFDQDDWETWSKMTSGTTIQIVGDDLTVTNPKRITTAVEKKACKCLLLKVNQIGSVTESIDAHLLAKKNGWGTMVSHRSGETEDCFIADLVVGLCTGQIKTGAPCRSERLAKYNQILRIEEELGSGAKFAGKNFRAPS.

An N-acetylserine modification is found at Ser-1. Residues Ser-36 and His-157 each coordinate (2R)-2-phosphoglycerate. Catalysis depends on Glu-209, which acts as the Proton donor. Mn(2+) contacts are provided by Asp-244, Glu-294, and Asp-319. Positions 344, 373, and 374 each coordinate (2R)-2-phosphoglycerate. Lys-344 (proton acceptor) is an active-site residue.

The protein belongs to the enolase family. As to quaternary structure, homodimer. Mg(2+) serves as cofactor.

It is found in the cytoplasm. The catalysed reaction is (2R)-2-phosphoglycerate = phosphoenolpyruvate + H2O. Its pathway is carbohydrate degradation; glycolysis; pyruvate from D-glyceraldehyde 3-phosphate: step 4/5. Its activity is regulated as follows. Inhibited by 2-phosphoglycolic acid. The sequence is that of Enolase from Homarus gammarus (European lobster).